The primary structure comprises 266 residues: PTS system mannose-specific EIIC component (266 aa).

Met-1 carries the post-translational modification N-formylmethionine. At 1 to 4 (MEIT) the chain is on the periplasmic side. The region spanning 1–237 (MEITTLQIVL…GVIGTVMAVL (237 aa)) is the PTS EIIC type-4 domain. Residues 5 to 43 (TLQIVLVFIVACIAGMGSILDEFQFHRPLIACTLVGIVL) lie within the membrane without spanning it. Topologically, residues 44 to 46 (GDM) are periplasmic. An intramembrane segment occupies 47-86 (KTGIIIGGTLEMIALGWMNIGAAVAPDAALASIISTILVI). At 87–90 (AGHQ) the chain is on the periplasmic side. At 91–124 (SIGAGIALAIPLAAAGQVLTIIVRTITVAFQHAA) the chain is embedded in the membrane. Residues 125–132 (DKAADNGN) lie on the Cytoplasmic side of the membrane. A membrane pass occupies residues 133-160 (LTAISWIHVSSLFLQAMRVAIPAVIVAL). Residues 161-176 (SVGTSEVQNMLNAIPE) are Periplasmic-facing. The segment at 177 to 200 (VVTNGLNIAGGMIVVVGYAMVINM) is a transmembrane helix. The Cytoplasmic portion of the chain corresponds to 201–207 (MRAGYLM). The chain crosses the lipid bilayer at residues 208–218 (PFFYLGFVTAA). Topologically, residues 219–224 (FTNFNL) are periplasmic. A membrane pass occupies residues 225-242 (VALGVIGTVMAVLYIQLS). The Cytoplasmic segment spans residues 243-266 (PKYNRVAGAPAQAAGNNDLDNELD).

As to quaternary structure, homotrimer of protomers that are composed of two subunits, IIC and IID.

The protein localises to the cell inner membrane. Functionally, the phosphoenolpyruvate-dependent sugar phosphotransferase system (sugar PTS), a major carbohydrate active transport system, catalyzes the phosphorylation of incoming sugar substrates concomitantly with their translocation across the cell membrane. The enzyme II ManXYZ PTS system is involved in mannose transport. The polypeptide is PTS system mannose-specific EIIC component (manY) (Escherichia coli O157:H7).